The primary structure comprises 232 residues: Small ribosomal subunit protein uS2 (232 aa).

Belongs to the universal ribosomal protein uS2 family.

The protein is Small ribosomal subunit protein uS2 of Carboxydothermus hydrogenoformans (strain ATCC BAA-161 / DSM 6008 / Z-2901).